A 206-amino-acid chain; its full sequence is Small ribosomal subunit protein uS4A (206 aa).

Residues 96–156 (GRLDNVVYRM…EKAKKQSRIG (61 aa)) form the S4 RNA-binding domain.

This sequence belongs to the universal ribosomal protein uS4 family. Part of the 30S ribosomal subunit. Contacts protein S5. The interaction surface between S4 and S5 is involved in control of translational fidelity.

In terms of biological role, one of the primary rRNA binding proteins, it binds directly to 16S rRNA where it nucleates assembly of the body of the 30S subunit. Functionally, with S5 and S12 plays an important role in translational accuracy. This chain is Small ribosomal subunit protein uS4A, found in Psychromonas ingrahamii (strain DSM 17664 / CCUG 51855 / 37).